The following is an 84-amino-acid chain: Sulfur carrier protein TusA (84 aa).

Cys-19 serves as the catalytic Cysteine persulfide intermediate.

The protein belongs to the sulfur carrier protein TusA family. As to quaternary structure, interacts with IscS.

Its subcellular location is the cytoplasm. It functions in the pathway tRNA modification. Functionally, sulfur carrier protein involved in sulfur trafficking in the cell. Part of a sulfur-relay system required for 2-thiolation during synthesis of 2-thiouridine of the modified wobble base 5-methylaminomethyl-2-thiouridine (mnm(5)s(2)U) in tRNA. Interacts with IscS and stimulates its cysteine desulfurase activity. Accepts an activated sulfur from IscS, which is then transferred to TusD, and thus determines the direction of sulfur flow from IscS to 2-thiouridine formation. Also appears to be involved in sulfur transfer for the biosynthesis of molybdopterin. This Yersinia enterocolitica serotype O:8 / biotype 1B (strain NCTC 13174 / 8081) protein is Sulfur carrier protein TusA.